Consider the following 328-residue polypeptide: Glucokinase (328 aa).

ATP is bound at residue 16–21 (ADIGGT).

It belongs to the bacterial glucokinase family.

The protein localises to the cytoplasm. The enzyme catalyses D-glucose + ATP = D-glucose 6-phosphate + ADP + H(+). This Neisseria gonorrhoeae (strain ATCC 700825 / FA 1090) protein is Glucokinase.